The primary structure comprises 348 residues: Heat-inducible transcription repressor HrcA (348 aa).

This sequence belongs to the HrcA family.

Its function is as follows. Negative regulator of class I heat shock genes (grpE-dnaK-dnaJ and groELS operons). Prevents heat-shock induction of these operons. The protein is Heat-inducible transcription repressor HrcA of Thermomicrobium roseum (strain ATCC 27502 / DSM 5159 / P-2).